Here is a 317-residue protein sequence, read N- to C-terminus: Tegument protein UL14 homolog (317 aa).

Residues 166-291 form a disordered region; the sequence is IAADPHSPRS…QKWLGGIPPL (126 aa). The segment covering 182-195 has biased composition (basic and acidic residues); it reads KAPEDARCGARKPG. Polar residues predominate over residues 198–211; the sequence is NNYTPSAQPRSQET. Basic and acidic residues-rich tracts occupy residues 217–236 and 249–265; these read ASPD…EHHS and SERR…KSSE.

This sequence belongs to the alphaherpesvirinae HHV-1 UL14 protein family.

The protein resides in the virion tegument. It is found in the host cytoplasm. The protein localises to the host nucleus. Contributes to the nuclear transport of the viral transcriptional activator VP16 during the early phase of infection. Therefore, participates indirectly in the regulation of the immediate-early gene expression. Additionally, seems to be important for efficient nuclear targeting of capsids. The sequence is that of Tegument protein UL14 homolog from Equus caballus (Horse).